Reading from the N-terminus, the 226-residue chain is Thiocyanate methyltransferase 1 (226 aa).

S-adenosyl-L-methionine-binding residues include W35, W39, W46, and G73. The residue at position 85 (S85) is a Phosphoserine. S-adenosyl-L-methionine-binding positions include D94, 122–123 (DF), and Y138.

This sequence belongs to the class I-like SAM-binding methyltransferase superfamily. TPMT family. As to expression, ubiquitous.

The catalysed reaction is thiocyanate + S-adenosyl-L-methionine = methyl thiocyanate + S-adenosyl-L-homocysteine. S-adenosyl-L-methionine-dependent methyltransferase. Probably involved in glucosinolate metabolism and defense against phytopathogens. Highly reactive to thiocyanate (NCS(-)) derived from myrosinase-mediated hydrolysis of glucosinolates upon tissue damage. Also accepts halid ions as substrates with a lower affinity. The polypeptide is Thiocyanate methyltransferase 1 (TMT1) (Brassica oleracea (Wild cabbage)).